We begin with the raw amino-acid sequence, 416 residues long: Imidazolonepropionase (416 aa).

Residues histidine 78 and histidine 80 each coordinate Fe(3+). Zn(2+) is bound by residues histidine 78 and histidine 80. 4-imidazolone-5-propanoate is bound by residues arginine 87, tyrosine 150, and histidine 183. Position 150 (tyrosine 150) interacts with N-formimidoyl-L-glutamate. Histidine 248 is a Fe(3+) binding site. Histidine 248 lines the Zn(2+) pocket. Residue glutamine 251 participates in 4-imidazolone-5-propanoate binding. Aspartate 323 is a Fe(3+) binding site. Aspartate 323 contacts Zn(2+). N-formimidoyl-L-glutamate contacts are provided by asparagine 325 and glycine 327. Threonine 328 contacts 4-imidazolone-5-propanoate.

Belongs to the metallo-dependent hydrolases superfamily. HutI family. The cofactor is Zn(2+). Fe(3+) serves as cofactor.

The protein resides in the cytoplasm. The catalysed reaction is 4-imidazolone-5-propanoate + H2O = N-formimidoyl-L-glutamate. The protein operates within amino-acid degradation; L-histidine degradation into L-glutamate; N-formimidoyl-L-glutamate from L-histidine: step 3/3. Its function is as follows. Catalyzes the hydrolytic cleavage of the carbon-nitrogen bond in imidazolone-5-propanoate to yield N-formimidoyl-L-glutamate. It is the third step in the universal histidine degradation pathway. The polypeptide is Imidazolonepropionase (Vibrio campbellii (strain ATCC BAA-1116)).